A 145-amino-acid polypeptide reads, in one-letter code: D-aminoacyl-tRNA deacylase (145 aa).

Positions 137–138 (GP) match the Gly-cisPro motif, important for rejection of L-amino acids motif.

The protein belongs to the DTD family. Homodimer.

It localises to the cytoplasm. The catalysed reaction is glycyl-tRNA(Ala) + H2O = tRNA(Ala) + glycine + H(+). The enzyme catalyses a D-aminoacyl-tRNA + H2O = a tRNA + a D-alpha-amino acid + H(+). Functionally, an aminoacyl-tRNA editing enzyme that deacylates mischarged D-aminoacyl-tRNAs. Also deacylates mischarged glycyl-tRNA(Ala), protecting cells against glycine mischarging by AlaRS. Acts via tRNA-based rather than protein-based catalysis; rejects L-amino acids rather than detecting D-amino acids in the active site. By recycling D-aminoacyl-tRNA to D-amino acids and free tRNA molecules, this enzyme counteracts the toxicity associated with the formation of D-aminoacyl-tRNA entities in vivo and helps enforce protein L-homochirality. The sequence is that of D-aminoacyl-tRNA deacylase from Shewanella sp. (strain MR-4).